The primary structure comprises 170 residues: CFA/I fimbrial subunit B (170 aa).

An N-terminal signal peptide occupies residues 1–23 (MKFKKTIGAMALTTMFVAVSASA).

It belongs to the fimbrial CS1 protein family. CFA/I fimbriae are rather rigid, thread-like filaments of 0.5-1 micrometer, with an apparent axial hole, and a diameter of 7 nanometers. A single CFA/I fimbria consists of about 100 identical protein subunits.

The protein resides in the fimbrium. Fimbriae (also called pili), polar filaments radiating from the surface of the bacterium to a length of 0.5-1.5 micrometers and numbering 100-300 per cell, enable bacteria to colonize the epithelium of specific host organs. The polypeptide is CFA/I fimbrial subunit B (cfaB) (Escherichia coli O78:H11 (strain H10407 / ETEC)).